The chain runs to 554 residues: Dihydroxy-acid dehydratase (554 aa).

D78 is a Mg(2+) binding site. Position 119 (C119) interacts with [2Fe-2S] cluster. Residues D120 and K121 each coordinate Mg(2+). At K121 the chain carries N6-carboxylysine. C191 is a binding site for [2Fe-2S] cluster. Position 442 (E442) interacts with Mg(2+). Catalysis depends on S468, which acts as the Proton acceptor.

Belongs to the IlvD/Edd family. In terms of assembly, homodimer. [2Fe-2S] cluster serves as cofactor. Mg(2+) is required as a cofactor.

The enzyme catalyses (2R)-2,3-dihydroxy-3-methylbutanoate = 3-methyl-2-oxobutanoate + H2O. It carries out the reaction (2R,3R)-2,3-dihydroxy-3-methylpentanoate = (S)-3-methyl-2-oxopentanoate + H2O. It participates in amino-acid biosynthesis; L-isoleucine biosynthesis; L-isoleucine from 2-oxobutanoate: step 3/4. Its pathway is amino-acid biosynthesis; L-valine biosynthesis; L-valine from pyruvate: step 3/4. Functions in the biosynthesis of branched-chain amino acids. Catalyzes the dehydration of (2R,3R)-2,3-dihydroxy-3-methylpentanoate (2,3-dihydroxy-3-methylvalerate) into 2-oxo-3-methylpentanoate (2-oxo-3-methylvalerate) and of (2R)-2,3-dihydroxy-3-methylbutanoate (2,3-dihydroxyisovalerate) into 2-oxo-3-methylbutanoate (2-oxoisovalerate), the penultimate precursor to L-isoleucine and L-valine, respectively. The sequence is that of Dihydroxy-acid dehydratase from Hydrogenobaculum sp. (strain Y04AAS1).